Reading from the N-terminus, the 102-residue chain is Monothiol glutaredoxin-S8 (102 aa).

Residues 1–101 (MEKIQKMISE…PMLKRFGALW (101 aa)) form the Glutaredoxin domain. A [2Fe-2S] cluster-binding site is contributed by C21. Residues 99-102 (ALWL) carry the Responsive for interaction with TGA factors motif.

The protein belongs to the glutaredoxin family. CC-type subfamily.

The protein localises to the cytoplasm. Its subcellular location is the nucleus. Functionally, may only reduce GSH-thiol disulfides, but not protein disulfides. This Arabidopsis thaliana (Mouse-ear cress) protein is Monothiol glutaredoxin-S8 (GRXS8).